The sequence spans 215 residues: S-crystallin 2 (215 aa).

The region spanning 2–80 (PSYTLHYFNH…YLAREFGFHG (79 aa)) is the GST N-terminal domain. The GST C-terminal domain occupies 82–215 (NNLDMARVDF…YLKSRSSTDF (134 aa)).

This sequence belongs to the GST superfamily. As to expression, lens.

S-crystallins are structural components of squids and octopi eye lens. Contains relatively little GST activity (1/1000 of that of mammalian GST enzyme). The chain is S-crystallin 2 (OCTS2) from Octopus vulgaris (Common octopus).